Consider the following 248-residue polypeptide: Phosphatidylglycerol--prolipoprotein diacylglyceryl transferase (248 aa).

The next 3 helical transmembrane spans lie at 6–26 (FTLF…GMIL), 47–67 (NIAI…YVVF), and 84–104 (GGGL…YIYT). Arg130 serves as a coordination point for a 1,2-diacyl-sn-glycero-3-phospho-(1'-sn-glycerol). 2 helical membrane-spanning segments follow: residues 186–206 (GQVI…IEGL) and 218–238 (MAQV…VYLS).

Belongs to the Lgt family.

The protein localises to the cell membrane. The enzyme catalyses L-cysteinyl-[prolipoprotein] + a 1,2-diacyl-sn-glycero-3-phospho-(1'-sn-glycerol) = an S-1,2-diacyl-sn-glyceryl-L-cysteinyl-[prolipoprotein] + sn-glycerol 1-phosphate + H(+). The protein operates within protein modification; lipoprotein biosynthesis (diacylglyceryl transfer). Its function is as follows. Catalyzes the transfer of the diacylglyceryl group from phosphatidylglycerol to the sulfhydryl group of the N-terminal cysteine of a prolipoprotein, the first step in the formation of mature lipoproteins. The sequence is that of Phosphatidylglycerol--prolipoprotein diacylglyceryl transferase from Clostridioides difficile (strain 630) (Peptoclostridium difficile).